Reading from the N-terminus, the 216-residue chain is Somatotropin (216 aa).

A signal peptide spans 1-26 (MAAGPRNSVLLAFALLCLPWPQEVGT). H45 contacts Zn(2+). An intrachain disulfide couples C78 to C189. Phosphoserine is present on S131. E198 lines the Zn(2+) pocket. An intrachain disulfide couples C206 to C214.

The protein belongs to the somatotropin/prolactin family.

It localises to the secreted. In terms of biological role, plays an important role in growth control. Its major role in stimulating body growth is to stimulate the liver and other tissues to secrete IGF1. It stimulates both the differentiation and proliferation of myoblasts. It also stimulates amino acid uptake and protein synthesis in muscle and other tissues. The polypeptide is Somatotropin (GH1) (Felis catus (Cat)).